Consider the following 223-residue polypeptide: Ribonuclease T (223 aa).

Residues V20–F195 form the Exonuclease domain. Mg(2+) is bound by residues D23, E25, H182, and D187. The active-site Proton donor/acceptor is H182.

It belongs to the RNase T family. Homodimer. Requires Mg(2+) as cofactor.

In terms of biological role, trims short 3' overhangs of a variety of RNA species, leaving a one or two nucleotide 3' overhang. Responsible for the end-turnover of tRNA: specifically removes the terminal AMP residue from uncharged tRNA (tRNA-C-C-A). Also appears to be involved in tRNA biosynthesis. This chain is Ribonuclease T, found in Photobacterium profundum (strain SS9).